Here is a 355-residue protein sequence, read N- to C-terminus: uncharacterized protein (355 aa).

The N-terminal stretch at 1-22 (MRLTHVTACICLLVAVAVLFSG) is a signal peptide.

This sequence belongs to the bacterial solute-binding protein 1 family. WtpA subfamily.

This is an uncharacterized protein from Methanoculleus marisnigri (strain ATCC 35101 / DSM 1498 / JR1).